The following is a 270-amino-acid chain: Proteasome subunit alpha type-1 (270 aa).

The segment at 239 to 270 (SMEAAEEAPAAEAESSSMQEEDKGTDAAPMDI) is disordered. A compositionally biased stretch (low complexity) spans 245–256 (EAPAAEAESSSM).

This sequence belongs to the peptidase T1A family. The 26S proteasome consists of a 20S proteasome core and two 19S regulatory subunits. The 20S proteasome core is composed of 28 subunits that are arranged in four stacked rings, resulting in a barrel-shaped structure. The two end rings are each formed by seven alpha subunits, and the two central rings are each formed by seven beta subunits. The catalytic chamber with the active sites is on the inside of the barrel.

It is found in the cytoplasm. Its subcellular location is the nucleus. Its function is as follows. The proteasome is a multicatalytic proteinase complex which is characterized by its ability to cleave peptides with Arg, Phe, Tyr, Leu, and Glu adjacent to the leaving group at neutral or slightly basic pH. The proteasome has an ATP-dependent proteolytic activity. This is Proteasome subunit alpha type-1 (PAF1) from Oryza sativa subsp. japonica (Rice).